A 273-amino-acid polypeptide reads, in one-letter code: WIMGHMVNAIAQIDEFVNLGANSIETDVSFDSSANPEYTYHGVPCDCGRTCTKWEHFNEFLKGLRKATTPGDSKYHEKLVLVVFDLKTGSLYDNQASDAGKKLAKSLLQNYWNNGNNGGRAYIVLSIPNLAHYKLITGFKEALTSEGHPELMDKVGYDFSGNDDIGDVANAYKKAGVTGHVWQSDGITNCLLRGLDRVRKAVANRDSSSGYINKVYYWTVDKRQSTRDALDAGVDGIMTNYPDVIADVLNESAYKAKFRIASYDDNPWETFKN.

His5 is a catalytic residue. Mg(2+) contacts are provided by Glu25 and Asp27. The active-site Nucleophile is His41. Disulfide bonds link Cys45-Cys51 and Cys47-Cys190. Asp85 contributes to the Mg(2+) binding site. Asn250 is a glycosylation site (N-linked (GlcNAc...) asparagine).

This sequence belongs to the arthropod phospholipase D family. Class II subfamily. Mg(2+) serves as cofactor. Expressed by the venom gland.

It is found in the secreted. The enzyme catalyses an N-(acyl)-sphingosylphosphocholine = an N-(acyl)-sphingosyl-1,3-cyclic phosphate + choline. It carries out the reaction an N-(acyl)-sphingosylphosphoethanolamine = an N-(acyl)-sphingosyl-1,3-cyclic phosphate + ethanolamine. The catalysed reaction is a 1-acyl-sn-glycero-3-phosphocholine = a 1-acyl-sn-glycero-2,3-cyclic phosphate + choline. It catalyses the reaction a 1-acyl-sn-glycero-3-phosphoethanolamine = a 1-acyl-sn-glycero-2,3-cyclic phosphate + ethanolamine. In terms of biological role, dermonecrotic toxins cleave the phosphodiester linkage between the phosphate and headgroup of certain phospholipids (sphingolipid and lysolipid substrates), forming an alcohol (often choline) and a cyclic phosphate. This toxin acts on sphingomyelin (SM). It may also act on ceramide phosphoethanolamine (CPE), lysophosphatidylcholine (LPC) and lysophosphatidylethanolamine (LPE), but not on lysophosphatidylserine (LPS), and lysophosphatidylglycerol (LPG). It acts by transphosphatidylation, releasing exclusively cyclic phosphate products as second products. Induces dermonecrosis, hemolysis, increased vascular permeability, edema, inflammatory response, and platelet aggregation. The protein is Dermonecrotic toxin LapSicTox-alphaIB1aiv of Loxosceles apachea (Apache recluse spider).